The sequence spans 191 residues: Adenine phosphoribosyltransferase 5 (191 aa).

It belongs to the purine/pyrimidine phosphoribosyltransferase family. Homodimer.

Its subcellular location is the cytoplasm. It catalyses the reaction AMP + diphosphate = 5-phospho-alpha-D-ribose 1-diphosphate + adenine. It functions in the pathway purine metabolism; AMP biosynthesis via salvage pathway; AMP from adenine: step 1/1. Functionally, catalyzes a salvage reaction resulting in the formation of AMP, that is energically less costly than de novo synthesis. May contribute to the recycling of adenine into adenylate nucleotides and the inactivation of cytokinins by phosphoribosylation. Possesses low activity toward adenine, but can efficiently convert cytokinins from free bases (active form) to the corresponding nucleotides (inactive form). The protein is Adenine phosphoribosyltransferase 5 (APT5) of Arabidopsis thaliana (Mouse-ear cress).